The chain runs to 575 residues: Cyclic nucleotide-gated channel alpha-4 (575 aa).

The Cytoplasmic portion of the chain corresponds to 1–38 (MSQDGKVKTTESTPPAPTKARKWLPVLDPSGDYYYWWL). Residues 39–60 (NTMVFPIMYNLIIVVCRACFPD) traverse the membrane as a helical segment. The Extracellular portion of the chain corresponds to 61–70 (LQHSYLVAWF). The helical transmembrane segment at 71–91 (VLDYTSDLLYLLDIGVRFHTG) threads the bilayer. The Cytoplasmic portion of the chain corresponds to 92–116 (FLEQGILVVDKGMIASRYVRTWSFL). Residues 117–135 (LDLASLVPTDAAYVQLGPH) traverse the membrane as a helical segment. Over 136–140 (IPTLR) the chain is Extracellular. A helical transmembrane segment spans residues 141–159 (LNRFLRVPRLFEAFDRTET). The Cytoplasmic segment spans residues 160–166 (RTAYPNA). The tract at residues 164–272 (PNAFRIAKLM…GSMSSVIYNM (109 aa)) is ion conduction pathway. The chain crosses the membrane as a helical span at residues 167-190 (FRIAKLMLYIFVVIHWNSCLYFAL). Over 191–213 (SRYLGFGRDAWVYPDPAQPGFER) the chain is Extracellular. 2 consecutive transmembrane segments (helical) span residues 214-248 (LRRQYLYSFYFSTLILTTVGDTPLPDREEEYLFMV) and 249-273 (GDFLLAVMGFATIMGSMSSVIYNMN). The segment at 231–234 (TVGD) is selectivity filter. Residues 274 to 350 (TADAAFYPDH…STLSRVQIFQ (77 aa)) form a C-linker region. Residues 274 to 575 (TADAAFYPDH…AGQAGPSGIE (302 aa)) are Cytoplasmic-facing. The short motif at 292-302 (LQHVNKRLERR) is the IQ-type element. Residue 348–471 (IFQNCEASLL…AVMEEKGREI (124 aa)) participates in a nucleoside 3',5'-cyclic phosphate binding. The tract at residues 354–474 (ASLLEELVLK…EEKGREILLK (121 aa)) is cyclic nucleotide-binding domain. 3',5'-cyclic GMP-binding residues include Gly414, Ser417, Arg430, and Thr431. 3',5'-cyclic AMP is bound by residues Arg430 and Thr431. The stretch at 493 to 547 (TESRLKGLDQQLDDLQTKFARLLAELESSALKIAYRIERLEWQTREWPMPEDMGE) forms a coiled coil. A disordered region spans residues 537 to 575 (REWPMPEDMGEADDEAEPGEGTSKDGEGKAGQAGPSGIE). A compositionally biased stretch (acidic residues) spans 544–554 (DMGEADDEAEP).

This sequence belongs to the cyclic nucleotide-gated cation channel (TC 1.A.1.5) family. CNGA4 subfamily. As to quaternary structure, the olfactory cyclic nucleotide-gated channel is an heterotetramer composed of CNGA2, CNGA4 and CNGB1b subunits with 2:1:1 stoichiometry. May form homomeric channels gated by nitric oxide. Post-translationally, N-glycosylated. As to expression, olfactory neurons. Expressed in olfactory sensory cilia (at protein level).

It is found in the cell projection. It localises to the cilium membrane. It catalyses the reaction Ca(2+)(in) = Ca(2+)(out). The enzyme catalyses Na(+)(in) = Na(+)(out). It carries out the reaction K(+)(in) = K(+)(out). The catalysed reaction is NH4(+)(in) = NH4(+)(out). It catalyses the reaction Rb(+)(in) = Rb(+)(out). The enzyme catalyses Li(+)(in) = Li(+)(out). It carries out the reaction Cs(+)(in) = Cs(+)(out). With respect to regulation, ca(2+)-calmodulin exerts its inhibitory effect in cAMP sensitivity by binding to IQ-like motif of CNGA4 and preferably binds to the channel in the closed state. Inhibition by PIP3 of the CNG channel probably occurs via CGNA2 binding. Ca(2+) currents are inhibited by pimozide, an L-type Ca(2+) channel blocker. Pore-forming subunit of the olfactory cyclic nucleotide-gated channel. Operates in the cilia of olfactory sensory neurons where chemical stimulation of the odorant is converted to an electrical signal. Mediates odorant-induced cAMP-dependent Ca(2+) influx triggering neuron depolarization. The rise of intracellular Ca(2+) levels potentiates the olfactory response by activating Ca(2+)-dependent Cl(-) channels, but it also serves as a negative feedback signal to desensitize the channel for rapid adaptation to odorants. Conducts cAMP- and cGMP-gated ion currents, with permeability for monovalent and divalent cations. May conduct nitric oxide-gated Ca(2+) currents relevant to neurons of vomeronasal organ, a system involved in the perception of pheromones. This Rattus norvegicus (Rat) protein is Cyclic nucleotide-gated channel alpha-4.